The following is an 851-amino-acid chain: UPF0182 protein CYA_1810 (851 aa).

A run of 7 helical transmembrane segments spans residues 7–27 (GLVL…LASF), 47–67 (VLAR…VVGS), 76–96 (ASTA…AWSL), 141–161 (FNLV…ELGL), 168–188 (LALS…LFLL), 220–240 (LPAT…FWAL), and 259–279 (WASS…FGLL).

Belongs to the UPF0182 family.

The protein resides in the cell membrane. The polypeptide is UPF0182 protein CYA_1810 (Synechococcus sp. (strain JA-3-3Ab) (Cyanobacteria bacterium Yellowstone A-Prime)).